A 198-amino-acid polypeptide reads, in one-letter code: Small ribosomal subunit protein eS1 (198 aa).

This sequence belongs to the eukaryotic ribosomal protein eS1 family.

In Nanoarchaeum equitans (strain Kin4-M), this protein is Small ribosomal subunit protein eS1.